A 140-amino-acid polypeptide reads, in one-letter code: UPF0134 protein MPN_130 (140 aa).

Belongs to the UPF0134 family.

This is UPF0134 protein MPN_130 from Mycoplasma pneumoniae (strain ATCC 29342 / M129 / Subtype 1) (Mycoplasmoides pneumoniae).